Consider the following 56-residue polypeptide: U-megalopygitoxin(2)-Mo9 (56 aa).

The signal sequence occupies residues 1 to 25 (MKFIVLLLIVTSVLMMFAVTTEASP). Pyrrolidone carboxylic acid is present on glutamine 26. Residue threonine 55 is modified to Threonine amide.

It belongs to the caterpillar 2 family. Post-translationally, contains 2 disulfide bonds. Expressed by the venom apparatus.

The protein localises to the secreted. Functionally, probable toxin. This Megalopyge opercularis (Southern flannel moth) protein is U-megalopygitoxin(2)-Mo9.